The following is a 393-amino-acid chain: uncharacterized protein (393 aa).

Residues C9, C15, C18, and C97 each coordinate [4Fe-4S] cluster. S-adenosyl-L-methionine-binding residues include Q231, Y258, E279, and D325. Residue C352 is the Nucleophile of the active site.

Belongs to the class I-like SAM-binding methyltransferase superfamily. RNA M5U methyltransferase family.

This is an uncharacterized protein from Leptospira interrogans serogroup Icterohaemorrhagiae serovar Lai (strain 56601).